The following is a 125-amino-acid chain: Large ribosomal subunit protein bL12 (125 aa).

The protein belongs to the bacterial ribosomal protein bL12 family. Homodimer. Part of the ribosomal stalk of the 50S ribosomal subunit. Forms a multimeric L10(L12)X complex, where L10 forms an elongated spine to which 2 to 4 L12 dimers bind in a sequential fashion. Binds GTP-bound translation factors.

Functionally, forms part of the ribosomal stalk which helps the ribosome interact with GTP-bound translation factors. Is thus essential for accurate translation. The polypeptide is Large ribosomal subunit protein bL12 (Thermoanaerobacter pseudethanolicus (strain ATCC 33223 / 39E) (Clostridium thermohydrosulfuricum)).